A 307-amino-acid polypeptide reads, in one-letter code: Porphobilinogen deaminase (307 aa).

At cysteine 239 the chain carries S-(dipyrrolylmethanemethyl)cysteine.

The protein belongs to the HMBS family. In terms of assembly, monomer. Requires dipyrromethane as cofactor.

The catalysed reaction is 4 porphobilinogen + H2O = hydroxymethylbilane + 4 NH4(+). It participates in porphyrin-containing compound metabolism; protoporphyrin-IX biosynthesis; coproporphyrinogen-III from 5-aminolevulinate: step 2/4. In terms of biological role, tetrapolymerization of the monopyrrole PBG into the hydroxymethylbilane pre-uroporphyrinogen in several discrete steps. In Campylobacter jejuni subsp. doylei (strain ATCC BAA-1458 / RM4099 / 269.97), this protein is Porphobilinogen deaminase.